A 154-amino-acid polypeptide reads, in one-letter code: Transcriptional repressor NrdR (154 aa).

A zinc finger spans residues 3 to 34 (CPFCRHPDSRVVDSRETDEGQAIRRRRSCPEC). One can recognise an ATP-cone domain in the interval 46-136 (LAVVKRSGVT…VYRSFSSAED (91 aa)).

This sequence belongs to the NrdR family. Zn(2+) serves as cofactor.

In terms of biological role, negatively regulates transcription of bacterial ribonucleotide reductase nrd genes and operons by binding to NrdR-boxes. The polypeptide is Transcriptional repressor NrdR (Mycolicibacterium vanbaalenii (strain DSM 7251 / JCM 13017 / BCRC 16820 / KCTC 9966 / NRRL B-24157 / PYR-1) (Mycobacterium vanbaalenii)).